Consider the following 364-residue polypeptide: MGRWALDVAFVWKAALTLGLVLLYYCFSIGITFYNKWLTKSFHFPLFMTMLHLAVIFLFSALSRALVQCSSHKARVVLSWTDYLRRVAPTALATALDVGLSNWSFLYITVSLYTMTKSSAVLFILIFSLIFKLEELRAALVLVVLLIAGGLFMFTYKSTQFNVEGFALVLGASFIGGIRWTLTQILLQKADLGLQNPIDTMFHLQPLMFLGLFPLFAIFEGLHLSTSEKIFRFQDTGLLLWVLGSLLLGGILAFGLGFSEFLLVSRTSSLTLSIAGIFKEVCTLLLAAHLLGDQISLLNWLGFALCLSGISLHVALKALHSRGDGGPKPLKSLGSSADLELLLRSSQQEEEDGEEEYFVTQGQQ.

Helical transmembrane passes span 14–34 (AALTLGLVLLYYCFSIGITFY) and 42–62 (FHFPLFMTMLHLAVIFLFSAL). The N-linked (GlcNAc...) asparagine glycan is linked to N102. A run of 7 helical transmembrane segments spans residues 104–124 (SFLYITVSLYTMTKSSAVLFI), 136–156 (LRAALVLVVLLIAGGLFMFTY), 166–186 (FALVLGASFIGGIRWTLTQIL), 202–222 (FHLQPLMFLGLFPLFAIFEGL), 238–258 (LLLWVLGSLLLGGILAFGLGF), 272–292 (LSIAGIFKEVCTLLLAAHLLG), and 295–315 (ISLLNWLGFALCLSGISLHVA). Phosphoserine occurs at positions 335 and 336.

Belongs to the TPT transporter family. SLC35C subfamily.

The protein localises to the golgi apparatus. It localises to the cis-Golgi network membrane. Its subcellular location is the endoplasmic reticulum-Golgi intermediate compartment membrane. May play an important role in the cellular response to tissue hypoxia. May be either a GDP-fucose transporter that competes with SLC35C1 for GDP-fucose, or a factor that otherwise enhances the fucosylation of Notch and is required for optimal Notch signaling in mammalian cells. The protein is Solute carrier family 35 member C2 (Slc35c2) of Mus musculus (Mouse).